The chain runs to 503 residues: GTPase Obg (503 aa).

Residues 2–159 form the Obg domain; the sequence is PQFVDRVVLH…KDVILELKSM (158 aa). Residues 160 to 340 enclose the OBG-type G domain; the sequence is ADVGLVGFPS…LKYALMDIVK (181 aa). GTP-binding positions include 166–173, 191–195, 212–215, 292–295, and 321–323; these read GFPSAGKS, FTTLV, DVPG, NKMD, and STV. Residues S173 and T193 each coordinate Mg(2+). Residues 371–444 enclose the OCT domain; it reads EFEVEADPSA…IGEITFEWDP (74 aa). Residues 457 to 476 show a composition bias toward basic and acidic residues; the sequence is RGTDVRLEQNTRATPEERKR. Positions 457–503 are disordered; the sequence is RGTDVRLEQNTRATPEERKRASQARRGLIDENDFGDGEVAERERWQG.

The protein belongs to the TRAFAC class OBG-HflX-like GTPase superfamily. OBG GTPase family. As to quaternary structure, monomer. Mg(2+) serves as cofactor.

It is found in the cytoplasm. In terms of biological role, an essential GTPase which binds GTP, GDP and possibly (p)ppGpp with moderate affinity, with high nucleotide exchange rates and a fairly low GTP hydrolysis rate. Plays a role in control of the cell cycle, stress response, ribosome biogenesis and in those bacteria that undergo differentiation, in morphogenesis control. This Corynebacterium jeikeium (strain K411) protein is GTPase Obg.